The chain runs to 622 residues: Chaperone protein DnaK (622 aa).

A Phosphothreonine; by autocatalysis modification is found at threonine 197. Basic and acidic residues-rich tracts occupy residues 515–528 (LHKE…EAVE) and 575–614 (ASKE…KKDD). 2 disordered regions span residues 515-537 (LHKE…DSLV) and 575-622 (ASKE…AEVE).

This sequence belongs to the heat shock protein 70 family.

Its function is as follows. Acts as a chaperone. The polypeptide is Chaperone protein DnaK (Campylobacter lari (strain RM2100 / D67 / ATCC BAA-1060)).